The chain runs to 303 residues: Flavin-dependent thymidylate synthase (303 aa).

The disordered stretch occupies residues 1 to 21 (MALTSEQRAEIEAQRSEPQLT). A ThyX domain is found at 43–256 (GFLRVVDYMG…PATAAAFEEY (214 aa)). FAD contacts are provided by residues T89, 112–114 (RHR), and E120. DUMP-binding positions include 109-112 (QWIR), 120-124 (EYSAR), and R195. The ThyX motif signature appears at 112–122 (RHRMASVNEYS). FAD-binding positions include 211 to 213 (DLH) and H217. Residue R222 coordinates dUMP. R222 (involved in ionization of N3 of dUMP, leading to its activation) is an active-site residue.

The protein belongs to the thymidylate synthase ThyX family. Homotetramer. Requires FAD as cofactor.

It catalyses the reaction dUMP + (6R)-5,10-methylene-5,6,7,8-tetrahydrofolate + NADPH + H(+) = dTMP + (6S)-5,6,7,8-tetrahydrofolate + NADP(+). Its pathway is pyrimidine metabolism; dTTP biosynthesis. Its function is as follows. Catalyzes the reductive methylation of 2'-deoxyuridine-5'-monophosphate (dUMP) to 2'-deoxythymidine-5'-monophosphate (dTMP) while utilizing 5,10-methylenetetrahydrofolate (mTHF) as the methyl donor, and NADPH and FADH(2) as the reductant. The protein is Flavin-dependent thymidylate synthase of Gluconobacter oxydans (strain 621H) (Gluconobacter suboxydans).